The sequence spans 273 residues: Imidazole glycerol phosphate synthase subunit HisF (273 aa).

Catalysis depends on residues Asp12 and Asp136.

The protein belongs to the HisA/HisF family. In terms of assembly, heterodimer of HisH and HisF.

The protein localises to the cytoplasm. The enzyme catalyses 5-[(5-phospho-1-deoxy-D-ribulos-1-ylimino)methylamino]-1-(5-phospho-beta-D-ribosyl)imidazole-4-carboxamide + L-glutamine = D-erythro-1-(imidazol-4-yl)glycerol 3-phosphate + 5-amino-1-(5-phospho-beta-D-ribosyl)imidazole-4-carboxamide + L-glutamate + H(+). The protein operates within amino-acid biosynthesis; L-histidine biosynthesis; L-histidine from 5-phospho-alpha-D-ribose 1-diphosphate: step 5/9. IGPS catalyzes the conversion of PRFAR and glutamine to IGP, AICAR and glutamate. The HisF subunit catalyzes the cyclization activity that produces IGP and AICAR from PRFAR using the ammonia provided by the HisH subunit. The protein is Imidazole glycerol phosphate synthase subunit HisF of Halobacterium salinarum (strain ATCC 29341 / DSM 671 / R1).